Here is a 1449-residue protein sequence, read N- to C-terminus: Disease resistance protein RPP5 (1449 aa).

The TIR domain maps to R10–L178. The active site involves E85. Residues E192 to V446 form the NB-ARC domain. LRR repeat units follow at residues M549 to P573, L574 to A595, Y597 to L618, G619 to R642, L644 to A665, M687 to P710, K712 to V732, E733 to L755, G756 to I779, A802 to L825, E826 to C849, L915 to T939, L941 to L962, Q963 to L985, S986 to W1011, A1028 to L1052, Q1053 to S1077, S1096 to F1119, and T1120 to L1143.

In terms of assembly, interacts with RSH1.

The catalysed reaction is NAD(+) + H2O = ADP-D-ribose + nicotinamide + H(+). TIR-NB-LRR receptor-like protein that confers resistance to the pathogen Hyaloperonospora arabidopsis isolate Noco2 (downy mildew disease). Confers resistance to H.arabidopsis isolates Emoy2, Emwa1 and Noco2. The protein is Disease resistance protein RPP5 of Arabidopsis thaliana (Mouse-ear cress).